A 200-amino-acid chain; its full sequence is 3-isopropylmalate dehydratase small subunit (200 aa).

Belongs to the LeuD family. LeuD type 1 subfamily. As to quaternary structure, heterodimer of LeuC and LeuD.

The catalysed reaction is (2R,3S)-3-isopropylmalate = (2S)-2-isopropylmalate. It participates in amino-acid biosynthesis; L-leucine biosynthesis; L-leucine from 3-methyl-2-oxobutanoate: step 2/4. Functionally, catalyzes the isomerization between 2-isopropylmalate and 3-isopropylmalate, via the formation of 2-isopropylmaleate. The sequence is that of 3-isopropylmalate dehydratase small subunit from Actinobacillus succinogenes (strain ATCC 55618 / DSM 22257 / CCUG 43843 / 130Z).